Here is a 211-residue protein sequence, read N- to C-terminus: MGKHRRNNSNATRKAVAASAVALGATAAIASPAQAAEVVVPGTGISVDIAGIETTPGLNNVPGIDQWIPSLSSQAAPTAYAAVIDAPAAEAQAAPAASTGQAIVDAARTKIGSPYGWGATGPNAFDCSGLTSWAYSQVGKSIPRTSQAQAAQGTPVAYSDLQAGDIVAFYSGATHVGIYSGHGTVIHALNSSTPLSEHSLDYMPFHSAVRF.

The first 35 residues, 1-35 (MGKHRRNNSNATRKAVAASAVALGATAAIASPAQA), serve as a signal peptide directing secretion. One can recognise a NlpC/P60 domain in the interval 97 to 211 (ASTGQAIVDA…YMPFHSAVRF (115 aa)). Cys-127 functions as the Nucleophile in the catalytic mechanism. His-175 acts as the Proton acceptor in catalysis. Residue His-187 is part of the active site.

The protein belongs to the peptidase C40 family.

The protein resides in the secreted. The protein is Probable endopeptidase cgR_2070 of Corynebacterium glutamicum (strain R).